A 135-amino-acid chain; its full sequence is MSEYWYPILGGILLGLSTVMLLLLNGRIAGISGIVGRLLQGGNPAQDIPFVVGLVLGPLVFSVIFDRFPSVTVAATWPTIIVAGLLVGLGTRMSAGCTSGHGIAGIARHSPRSIVATAIFLISGMATATFMGVYQ.

Helical transmembrane passes span Y4–L24, A45–F65, V71–T91, and I114–Y134.

It belongs to the TsuA/YedE (TC 9.B.102) family.

It localises to the cell inner membrane. The protein is Probable transporter XF_0766 of Xylella fastidiosa (strain 9a5c).